We begin with the raw amino-acid sequence, 102 residues long: Putative defensin-like protein 152 (102 aa).

The N-terminal stretch at 1–29 is a signal peptide; the sequence is MKKASQLSTTILTIFIVLAIGMMVKGTVG. 4 disulfides stabilise this stretch: Cys-34–Cys-93, Cys-51–Cys-71, Cys-56–Cys-87, and Cys-60–Cys-89.

This sequence belongs to the DEFL family.

Its subcellular location is the secreted. The polypeptide is Putative defensin-like protein 152 (LCR11) (Arabidopsis thaliana (Mouse-ear cress)).